We begin with the raw amino-acid sequence, 103 residues long: Transcriptional regulator WhiB7 (103 aa).

Residues Cys-17, Cys-49, Cys-52, and Cys-58 each coordinate [4Fe-4S] cluster. The 4Fe-4S Wbl-type domain occupies 25 to 82 (PCHVGDPDLWFAENPGDLERAKALCAGCPIRVQCLTAALERQEPWGVWGGEILDRGSI). Positions 82 to 103 (IVARKRPRGRPRKDSGGNPAAA) are disordered.

The protein belongs to the WhiB family. [4Fe-4S] cluster serves as cofactor. In terms of processing, the Fe-S cluster can be nitrosylated by nitric oxide (NO). Post-translationally, upon Fe-S cluster removal intramolecular disulfide bonds are formed.

Its subcellular location is the cytoplasm. Acts as a transcriptional regulator. Probably redox-responsive. The apo- but not holo-form probably binds DNA. Participates in maintaining a reduced cytoplasmic (MSH/MSSM) environment under normal growth conditions and directly or indirectly controls the concentration of mycothiol (MSH + MSSM). In Mycolicibacterium smegmatis (strain ATCC 700084 / mc(2)155) (Mycobacterium smegmatis), this protein is Transcriptional regulator WhiB7 (whiB7).